The sequence spans 158 residues: Anaerobic nitrite reductase AHB2 (158 aa).

One can recognise a Globin domain in the interval 5-154 (GFTEKQEALV…LALAIKTEMK (150 aa)). A Homodimerization motif is present at residues 38-42 (EIAPA). Positions 48, 62, 66, and 101 each coordinate heme b. A Homodimerization motif is present at residues 108 to 120 (DPHFEVVKEALLR).

The protein belongs to the plant globin family. As to quaternary structure, unable to dimerize. Heme b is required as a cofactor. As to expression, expressed in rosette leaves but not in roots.

Its subcellular location is the cytoplasm. It is found in the nucleus. It catalyses the reaction Fe(III)-heme b-[protein] + nitric oxide + H2O = Fe(II)-heme b-[protein] + nitrite + 2 H(+). Functionally, phytoglobin that reduces nitrite to nitric oxide (NO) under anoxic conditions (e.g. during flooding or in waterlogged soil). May not function as an oxygen storage or transport protein. Has an unusually high affinity for O(2) through an hexacoordinate heme iron because of a very low dissociation constant. This is Anaerobic nitrite reductase AHB2 from Arabidopsis thaliana (Mouse-ear cress).